The primary structure comprises 1445 residues: Tensin-3 (1445 aa).

The Phosphatase tensin-type domain maps to 1–170 (MEEGHGLDLT…QFLSGLLSGS (170 aa)). Positions 175–301 (ASPLFLHFVI…GKVELVFSAT (127 aa)) constitute a C2 tensin-type domain. Threonine 323 is subject to Phosphothreonine. 2 positions are modified to phosphoserine: serine 332 and serine 361. Residues 358 to 421 (RKKSSSDPGI…GTRRGLSAQE (64 aa)) form a disordered region. A compositionally biased stretch (polar residues) spans 386-400 (TLSVSSDSGHSTASA). Phosphoserine occurs at positions 440 and 516. The segment at 538-568 (VPDLGLGMDGPYERERTFGSREPKQPQPLLR) is disordered. The segment covering 548–561 (PYERERTFGSREPK) has biased composition (basic and acidic residues). Serine 571 is subject to Phosphoserine. Disordered regions lie at residues 618–695 (DNPG…TLDI) and 717–769 (PTHM…QPLG). Position 632 is a phosphothreonine (threonine 632). Residues serine 649, serine 660, serine 687, and serine 690 each carry the phosphoserine modification. Polar residues predominate over residues 723-733 (LGSQANGSVSP). Serine 735 and serine 776 each carry phosphoserine. Phosphotyrosine is present on tyrosine 780. 3 positions are modified to phosphoserine: serine 811, serine 866, and serine 901. 2 disordered regions span residues 859–981 (ALRH…TRKD) and 1076–1127 (GHSS…PHSG). A compositionally biased stretch (pro residues) spans 864–873 (PFSPPEPPLS). The segment covering 914-935 (ASSTPSFQQAFASSCTISSNGP) has biased composition (polar residues). Over residues 1099-1109 (PEKKRASEGDR) the composition is skewed to basic and acidic residues. The segment covering 1110–1127 (SLGSVSPSSSGFSSPHSG) has biased composition (low complexity). Residues serine 1149 and serine 1154 each carry the phosphoserine modification. Residues 1172–1282 (WYKADISREQ…ALPCKLLIPE (111 aa)) form the SH2 domain. A phosphoserine mark is found at serine 1293 and serine 1441. The region spanning 1310–1444 (ACNVWYLNSV…SKVMIGSPKK (135 aa)) is the PTB domain.

Belongs to the PTEN phosphatase protein family. Interacts with EGFR; EGF promotes the interaction with EGFR. Interacts with PTK2/FAK1 and BCAR1. Tyrosine phosphorylation is critical for these interactions. Interacts with Rho GTPase-activating protein DLC1 and with the regulatory p85 subunit of the PI3K kinase complex; in resting cells, interacts (via C2 tensin-type domain) with DLC1 but, following growth factor stimulation, TNS3 is phosphorylated which leads to weakened interaction with DLC1 and enhanced interaction (via C2 tensin-type domain) with p85 while DLC1 interaction with PTEN increases. Interacts (when phosphorylated on the SH2 domain) with integrins ITGB1, ITGB3 and ITGB5 and with scaffolding protein PEAK1 (phosphorylated on 'Tyr-635'); mediates the association of PEAK1 with ITGB1, ITGB3 and ITGB5. Interacts (via N-terminus) with DOCK5 (via N-terminus); the interaction increases DOCK5 guanine nucleotide exchange activity towards Rac. Interacts with receptor tyrosine kinase MET. Phosphorylated on Ser/Thr and Tyr residues. Phosphorylated on Thr-323 in the C2-type tensin domain following EGF stimulation which changes its binding preference from DLC1 to the p85 regulatory subunit of the PI3K kinase complex. EGF induces tyrosine phosphorylation in a time- and dose-dependent manner. Phosphorylation of the SH2 domain enhances interaction with PEAK1. As to expression, expressed in umbilical vein endothelial cells, epithelial cells, and fibroblasts cells (at protein level). Highly expressed in thyroid, kidney and placenta. Low expression in heart, skeletal muscle, spleen, liver, and lung. Expressed at higher levels in tonsil-derived mesenchymal stem cells (MSCs) than in adipose tissue-derived MSCs or bone marrow-derived MSCs. Expressed in tumor endothelial cells. Expression seems to be down-regulated in thyroid tumor tissues and in anaplastic carcinomas.

It localises to the cell junction. It is found in the focal adhesion. The protein resides in the cell projection. The protein localises to the podosome. May act as a protein phosphatase and/or a lipid phosphatase. Involved in the dissociation of the integrin-tensin-actin complex. EGF activates TNS4 and down-regulates TNS3 which results in capping the tail of ITGB1. Increases DOCK5 guanine nucleotide exchange activity towards Rac and plays a role in osteoclast podosome organization. Enhances RHOA activation in the presence of DLC1. Required for growth factor-induced epithelial cell migration; growth factor stimulation induces TNS3 phosphorylation which changes its binding preference from DLC1 to the p85 regulatory subunit of the PI3K kinase complex, displacing PI3K inhibitor PTEN and resulting in translocation of the TNS3-p85 complex to the leading edge of migrating cells to promote RAC1 activation. Meanwhile, PTEN switches binding preference from p85 to DLC1 and the PTEN-DLC1 complex translocates to the posterior of migrating cells to activate RHOA. Acts as an adapter protein by bridging the association of scaffolding protein PEAK1 with integrins ITGB1, ITGB3 and ITGB5 which contributes to the promotion of cell migration. Controls tonsil-derived mesenchymal stem cell proliferation and differentiation by regulating the activity of integrin ITGB1. This is Tensin-3 (TNS3) from Homo sapiens (Human).